Reading from the N-terminus, the 371-residue chain is Cytochrome b (371 aa).

4 consecutive transmembrane segments (helical) span residues 25-45 (FGSM…FLAV), 69-90 (WLMQ…YTHI), 105-125 (WLSG…GYVL), and 170-190 (FFAL…LHIM). Heme b is bound by residues histidine 75 and histidine 89. Residues histidine 174 and histidine 188 each contribute to the heme b site. Residue histidine 193 coordinates a ubiquinone. A run of 4 helical transmembrane segments spans residues 218–238 (YKDM…VAFF), 280–300 (LGGA…PFTH), 312–332 (IMQF…WAAT), and 339–358 (FTAI…ITNP).

The protein belongs to the cytochrome b family. The cytochrome bc1 complex contains 3 respiratory subunits (MT-CYB, CYC1 and UQCRFS1), 2 core proteins (UQCRC1 and UQCRC2) and probably 6 low-molecular weight proteins. Heme b is required as a cofactor.

It is found in the mitochondrion inner membrane. Component of the ubiquinol-cytochrome c reductase complex (complex III or cytochrome b-c1 complex) that is part of the mitochondrial respiratory chain. The b-c1 complex mediates electron transfer from ubiquinol to cytochrome c. Contributes to the generation of a proton gradient across the mitochondrial membrane that is then used for ATP synthesis. This chain is Cytochrome b (MT-CYB), found in Eryx colubrinus loveridgei.